The following is a 650-amino-acid chain: DNA gyrase subunit B (650 aa).

Residues 400-414 show a composition bias toward basic and acidic residues; it reads RRSQEARELTRRKSP. The segment at 400-422 is disordered; that stretch reads RRSQEARELTRRKSPFDSGSLPG. The 115-residue stretch at 435–549 folds into the Toprim domain; it reads SELYIVEGDS…QGNIYIAQPP (115 aa). The Mg(2+) site is built by Glu441, Asp514, and Asp516.

This sequence belongs to the type II topoisomerase GyrB family. Heterotetramer, composed of two GyrA and two GyrB chains. In the heterotetramer, GyrA contains the active site tyrosine that forms a transient covalent intermediate with DNA, while GyrB binds cofactors and catalyzes ATP hydrolysis. The cofactor is Mg(2+). Mn(2+) serves as cofactor. Ca(2+) is required as a cofactor.

It localises to the cytoplasm. The enzyme catalyses ATP-dependent breakage, passage and rejoining of double-stranded DNA.. Its function is as follows. A type II topoisomerase that negatively supercoils closed circular double-stranded (ds) DNA in an ATP-dependent manner to modulate DNA topology and maintain chromosomes in an underwound state. Negative supercoiling favors strand separation, and DNA replication, transcription, recombination and repair, all of which involve strand separation. Also able to catalyze the interconversion of other topological isomers of dsDNA rings, including catenanes and knotted rings. Type II topoisomerases break and join 2 DNA strands simultaneously in an ATP-dependent manner. This is DNA gyrase subunit B from Mycoplasma pneumoniae (strain ATCC 29342 / M129 / Subtype 1) (Mycoplasmoides pneumoniae).